The following is a 670-amino-acid chain: Protein ACCELERATED CELL DEATH 6 (670 aa).

At 1–456 (MDSSGADLDR…PNYIFHERWT (456 aa)) the chain is on the cytoplasmic side. A disordered region spans residues 18–47 (LVSHDQRKDFSHSGGVGTTSPTGDTEPVPK). 10 ANK repeats span residues 66–95 (EMTP…PMER), 100–129 (TGDS…CLLF), 134–163 (SRQT…SALA), 182–211 (DGNT…DAPF), 216–248 (KGIS…NVDR), 260–290 (QGNK…SLMD), 295–325 (DGRT…GVYV), 329–358 (DGSF…ASKY), 363–391 (LGQN…DTKH), and 399–428 (DGNT…EILK). A helical membrane pass occupies residues 457–477 (LALLLYAIHSSGFESVKSLTI). The Extracellular segment spans residues 478–492 (QSVPLDPKKNRHYVN). A helical membrane pass occupies residues 493–513 (ALLVVAALVATVTFAAGFTIP). Topologically, residues 514 to 537 (GGYISDSKKPNLGRATLATNPTLF) are cytoplasmic. Residues 538 to 558 (IFLLFDILAMQSSVATICTLI) form a helical membrane-spanning segment. At 559–577 (WAQLGDLALILKSLHVALP) the chain is on the extracellular side. The chain crosses the membrane as a helical span at residues 578 to 598 (LLLFSLLCMPVAFLFGVITAI). Residues 599-602 (AHVK) are Cytoplasmic-facing. A helical transmembrane segment spans residues 603–623 (WLLVTISIISGGFFLFAIFIL). The Extracellular portion of the chain corresponds to 624–638 (GPHVMLQRSHLPPSS). The chain crosses the membrane as a helical span at residues 639 to 659 (GIFLKTFMLTIDISELFVILI). At 660–670 (KACFGCVACSE) the chain is on the cytoplasmic side.

Component of large complexes containing, at least, FLS2, HSP70 and ACD6 in endoplasmic reticulum, plasma membrane and soluble fraction. Associated with HSP70 proteins during endoplasmic reticulum-associated degradation (ERAD). Reduced complex levels upon benzothiazole (BTH) treatment. In terms of processing, ubiquitinated. Basal expression requires light and salicylic acid (SA).

It localises to the cell membrane. The protein localises to the endoplasmic reticulum membrane. Functionally, dose-dependent activator of the defense response against virulent pathogens, including bacteria, fungi and oomycetes, that acts in a positive feedback loop with the defense signal salicylic acid (SA). Regulates the salicylic acid (SA) signaling pathway leading to cell death and modulating cell fate (e.g. cell enlargement and/or cell division). In response to SA signaling, triggers the accumulation of FLS2 at the plasma membrane, thus priming defenses. Involved in SA-dependent freezing signaling and tolerance. The protein is Protein ACCELERATED CELL DEATH 6 of Arabidopsis thaliana (Mouse-ear cress).